A 487-amino-acid chain; its full sequence is MKPRMEYAPEFDNSYARQLSGFYTRLQPTPLKGARLLYHSKPLAQELGLDAHWFTEPKTAVWAGEALLPGMEPLAQVYSGHQFGMWAGQLGDGRGILLGEQRLNDGRYMDWHLKGAGLTPYSRMGDGRAVLRSVIREFLASEALHHLGIPTSRALTIVTSDHPIYREQTERGAMLLRVAESHIRFGHFEHFYYRQQPKQVQQLADYVIARHWPQWVGHQECYRLWFTDVVERTARLMAHWQTVGFAHGVMNTDNMSILGITMDYGPFGFLDDYVPGYICNHSDHQGRYAYDNQPAVALWNLHRLGHALSGLMSADQLQLALEAYEPALMVAYGEQMRAKLGFLERDSQDNDLLTGLLSLMIKEGRDYTRTFRLLSEVEVHSAQSPLRDDFIDRAAFDDWYRRYRSRLQQESIDDDQRQQSMKAANPKYILRNYLAQQAITQAEKDDIQPLQRLHQALQQPFTDQPEFDDLAALPPDWGKHLEISCSS.

The ATP site is built by Gly91, Gly93, Arg94, Lys114, Asp126, Gly127, Arg177, and Arg184. Asp253 functions as the Proton acceptor in the catalytic mechanism. Mg(2+) contacts are provided by Asn254 and Asp263. ATP is bound at residue Asp263.

The protein belongs to the SELO family. Requires Mg(2+) as cofactor. Mn(2+) is required as a cofactor.

The enzyme catalyses L-seryl-[protein] + ATP = 3-O-(5'-adenylyl)-L-seryl-[protein] + diphosphate. It catalyses the reaction L-threonyl-[protein] + ATP = 3-O-(5'-adenylyl)-L-threonyl-[protein] + diphosphate. The catalysed reaction is L-tyrosyl-[protein] + ATP = O-(5'-adenylyl)-L-tyrosyl-[protein] + diphosphate. It carries out the reaction L-histidyl-[protein] + UTP = N(tele)-(5'-uridylyl)-L-histidyl-[protein] + diphosphate. The enzyme catalyses L-seryl-[protein] + UTP = O-(5'-uridylyl)-L-seryl-[protein] + diphosphate. It catalyses the reaction L-tyrosyl-[protein] + UTP = O-(5'-uridylyl)-L-tyrosyl-[protein] + diphosphate. Its function is as follows. Nucleotidyltransferase involved in the post-translational modification of proteins. It can catalyze the addition of adenosine monophosphate (AMP) or uridine monophosphate (UMP) to a protein, resulting in modifications known as AMPylation and UMPylation. In Yersinia pestis (strain Pestoides F), this protein is Protein nucleotidyltransferase YdiU.